Reading from the N-terminus, the 486-residue chain is 3-dehydroshikimate dehydratase (486 aa).

The catalysed reaction is 3-dehydroshikimate = 3,4-dihydroxybenzoate + H2O. It participates in aromatic compound metabolism; 3,4-dihydroxybenzoate biosynthesis; 3,4-dihydroxybenzoate from 3-dehydroquinate: step 2/2. Functionally, converts dehydroshikimate to protocatechuate. The polypeptide is 3-dehydroshikimate dehydratase (quiC) (Acinetobacter baylyi (strain ATCC 33305 / BD413 / ADP1)).